The primary structure comprises 592 residues: Thiol:disulfide interchange protein DsbD (592 aa).

An N-terminal signal peptide occupies residues 1-19 (MKLIASFSIFMLMSIWSFA). 2 disulfide bridges follow: cysteine 130-cysteine 136 and cysteine 204-cysteine 326. A run of 8 helical transmembrane segments spans residues 186–206 (IWVL…PCVF), 229–249 (FVLS…LGLV), 265–285 (IILG…FGAW), 318–338 (ISGL…LLYI), 345–365 (LLGF…LILF), 379–399 (WMNI…LMFV), 406–426 (MATD…FYVM), and 440–460 (ALVI…TIFG). Residues 443–592 (IFIGLFASAM…AFAAHAKNIL (150 aa)) form the Thioredoxin domain. A disulfide bond links cysteine 508 and cysteine 511.

It belongs to the thioredoxin family. DsbD subfamily.

The protein resides in the cell inner membrane. The enzyme catalyses [protein]-dithiol + NAD(+) = [protein]-disulfide + NADH + H(+). It carries out the reaction [protein]-dithiol + NADP(+) = [protein]-disulfide + NADPH + H(+). Required to facilitate the formation of correct disulfide bonds in some periplasmic proteins and for the assembly of the periplasmic c-type cytochromes. Acts by transferring electrons from cytoplasmic thioredoxin to the periplasm. This transfer involves a cascade of disulfide bond formation and reduction steps. This chain is Thiol:disulfide interchange protein DsbD, found in Pseudoalteromonas atlantica (strain T6c / ATCC BAA-1087).